Consider the following 463-residue polypeptide: Arginine biosynthesis bifunctional protein ArgJ, chloroplastic (463 aa).

The substrate site is built by Thr-207, Lys-233, Thr-244, Glu-331, Asn-458, and Thr-463. Thr-244 (nucleophile) is an active-site residue.

The protein belongs to the ArgJ family. In terms of assembly, heterodimer of an alpha and a beta chain.

It is found in the plastid. It localises to the chloroplast. It catalyses the reaction N(2)-acetyl-L-ornithine + L-glutamate = N-acetyl-L-glutamate + L-ornithine. The enzyme catalyses L-glutamate + acetyl-CoA = N-acetyl-L-glutamate + CoA + H(+). It functions in the pathway amino-acid biosynthesis; L-arginine biosynthesis; L-ornithine and N-acetyl-L-glutamate from L-glutamate and N(2)-acetyl-L-ornithine (cyclic): step 1/1. It participates in amino-acid biosynthesis; L-arginine biosynthesis; N(2)-acetyl-L-ornithine from L-glutamate: step 1/4. In terms of biological role, catalyzes two activities which are involved in the cyclic version of arginine biosynthesis: the synthesis of acetylglutamate from glutamate and acetyl-CoA, and of ornithine by transacetylation between acetylornithine and glutamate. In Oryza sativa subsp. japonica (Rice), this protein is Arginine biosynthesis bifunctional protein ArgJ, chloroplastic.